A 348-amino-acid polypeptide reads, in one-letter code: Uroporphyrinogen decarboxylase (348 aa).

Residues 27 to 31 (RQAGR), Phe-46, Asp-76, Tyr-152, Ser-207, and His-320 each bind substrate.

It belongs to the uroporphyrinogen decarboxylase family. In terms of assembly, homodimer.

Its subcellular location is the cytoplasm. It catalyses the reaction uroporphyrinogen III + 4 H(+) = coproporphyrinogen III + 4 CO2. It functions in the pathway porphyrin-containing compound metabolism; protoporphyrin-IX biosynthesis; coproporphyrinogen-III from 5-aminolevulinate: step 4/4. Catalyzes the decarboxylation of four acetate groups of uroporphyrinogen-III to yield coproporphyrinogen-III. The polypeptide is Uroporphyrinogen decarboxylase (Bacillus cereus (strain B4264)).